An 822-amino-acid chain; its full sequence is Adhesion G protein-coupled receptor E2 (822 aa).

The first 18 residues, 1–18 (MGGRVFLAFCVWLTLLGA), serve as a signal peptide directing secretion. Residues 19 to 530 (ETQDSRDCAR…DVQEEDPVLT (512 aa)) lie on the Extracellular side of the membrane. One can recognise an EGF-like 1 domain in the interval 22 to 63 (DSRDCARWCPENSSCVNATACRCNPGFSSSSEIFTSPTEICD). 5 disulfide bridges follow: Cys-26-Cys-36, Cys-30-Cys-42, Cys-44-Cys-62, Cys-68-Cys-82, and Cys-76-Cys-91. Asn-33 and Asn-38 each carry an N-linked (GlcNAc...) asparagine glycan. The region spanning 64–103 (DINECVPPSKVSCGKSSDCRNTEGSYDCVCNPGYELVSGA) is the EGF-like 1; calcium-binding domain. N-linked (GlcNAc...) asparagine glycosylation is present at Asn-108. In terms of domain architecture, EGF-like 2; calcium-binding spans 116-159 (DVDECQQNPRLCKSYGTCVNTLGSFTCQCLPGFKFKPEDPKLCT). Intrachain disulfides connect Cys-120-Cys-133, Cys-127-Cys-142, Cys-144-Cys-158, Cys-164-Cys-177, and Cys-171-Cys-186. An EGF-like 3; calcium-binding domain is found at 160 to 198 (DVNECTSGQNPCHSSTHCLNNVGSYQCRCRPGWQPIPGS). N-linked (GlcNAc...) asparagine glycosylation is found at Asn-203, Asn-222, Asn-351, Asn-371, Asn-427, Asn-449, and Asn-453. Residues 209-247 (DVDECSSGLHQCDNSTVCFNTVGSYTCRCRPGWEPKHGI) enclose the EGF-like 4; calcium-binding domain. 2 disulfides stabilise this stretch: Cys-213–Cys-226 and Cys-220–Cys-235. A GAIN-B domain is found at 351 to 523 (NFSYPAGTEF…AVLMAPYDVQ (173 aa)). Intrachain disulfides connect Cys-475–Cys-505 and Cys-493–Cys-507. Positions 475–523 (CVFWEHGQNGCGHWATTGCSTMDTRDTSTICRCTHLSSFAVLMAPYDVQ) are GPS. A helical transmembrane segment spans residues 531–551 (VITYMGLSLSLLCLLLAALTF). At 552 to 562 (LLCKAIQNIST) the chain is on the cytoplasmic side. Residues 563–583 (SLHLQLSLCLLLAHLLFLVAI) form a helical membrane-spanning segment. Topologically, residues 584–589 (DRTEHE) are extracellular. A helical transmembrane segment spans residues 590 to 610 (VLCAIIASALHYLYLAAFTWM). The Cytoplasmic segment spans residues 611-637 (LLEALYLFLTARNLMVVNYSSINRFTK). The chain crosses the membrane as a helical span at residues 638–658 (KLMFPVAYGVPAVTVAISAAS). Over 659–676 (RPHLYGTPSRCWLQPEKG) the chain is Extracellular. A helical transmembrane segment spans residues 677 to 697 (FIWGFLGPVCAIFSVNLALLL). Topologically, residues 698–728 (VTLWILKNRLSSLNNEVSTLQNTRMLAFKAT) are cytoplasmic. A helical transmembrane segment spans residues 729–749 (AQLFILGCTWCLGILQVGPAA). The Extracellular portion of the chain corresponds to 750-753 (RVMA). The chain crosses the membrane as a helical span at residues 754–774 (YLFTIINSLQGVFIFLVYCLL). Over 775–822 (SQQVREQYRKWSKGFRKLRTESEMHTLSSSAKRDTPKPSTPGLLGLQS) the chain is Cytoplasmic. Residues 797 to 822 (EMHTLSSSAKRDTPKPSTPGLLGLQS) form a disordered region.

It belongs to the G-protein coupled receptor 2 family. Adhesion G-protein coupled receptor (ADGR) subfamily. As to quaternary structure, forms a heterodimer, consisting of a large extracellular region non-covalently linked to a seven-transmembrane moiety. Interacts with chondroitin sulfate; the interaction with chondroitin sulfate is calcium-dependent. Interacts with CD55. In terms of processing, autoproteolytically cleaved into 2 subunits, an extracellular alpha subunit and a seven-transmembrane beta subunit.

It localises to the cell membrane. The protein localises to the cell projection. The protein resides in the ruffle membrane. Cell surface receptor that binds to the chondroitin sulfate moiety of glycosaminoglycan chains and promotes cell attachment. Promotes granulocyte chemotaxis, degranulation and adhesion. In macrophages, promotes the release of inflammatory cytokines, including IL8 and TNF. Signals probably through G-proteins. The protein is Adhesion G protein-coupled receptor E2 (ADGRE2) of Macaca mulatta (Rhesus macaque).